Consider the following 696-residue polypeptide: DNA-directed RNA polymerase subunit beta' (696 aa).

Cysteine 76, cysteine 78, cysteine 94, and cysteine 97 together coordinate Zn(2+). Aspartate 496, aspartate 498, and aspartate 500 together coordinate Mg(2+).

This sequence belongs to the RNA polymerase beta' chain family. RpoC1 subfamily. In plastids the minimal PEP RNA polymerase catalytic core is composed of four subunits: alpha, beta, beta', and beta''. When a (nuclear-encoded) sigma factor is associated with the core the holoenzyme is formed, which can initiate transcription. Requires Mg(2+) as cofactor. Zn(2+) is required as a cofactor.

It localises to the plastid. It is found in the chloroplast. The catalysed reaction is RNA(n) + a ribonucleoside 5'-triphosphate = RNA(n+1) + diphosphate. DNA-dependent RNA polymerase catalyzes the transcription of DNA into RNA using the four ribonucleoside triphosphates as substrates. In Guizotia abyssinica (Niger), this protein is DNA-directed RNA polymerase subunit beta'.